We begin with the raw amino-acid sequence, 266 residues long: Protein SCO2 homolog, mitochondrial (266 aa).

The N-terminal 41 residues, 1 to 41 (MLLLTRSPTAWHRLSQLKPRVLPGTLGGQALHLRSWLLSRQ), are a transit peptide targeting the mitochondrion. The Mitochondrial matrix segment spans residues 42–60 (GPAETGGQGQPQGPGLRTR). The helical transmembrane segment at 61-78 (LLITGLFGAGLGGAWLAL) threads the bilayer. Over 79–266 (RAEKERLQQQ…HMAAFRSVLS (188 aa)) the chain is Mitochondrial intermembrane. Positions 85 to 259 (LQQQKRTEAL…ISDSVRRHMA (175 aa)) constitute a Thioredoxin domain. Cys133, Cys137, and His224 together coordinate Cu cation. An intrachain disulfide couples Cys133 to Cys137.

It belongs to the SCO1/2 family. Homodimer. Interacts with COA6. Found in a complex with TMEM177, COX20, COA6, MT-CO2/COX2, COX18 and SCO1. Interacts with TMEM177 in a COX20-dependent manner. Interacts with COX20 in a MT-CO2/COX2- and COX18-dependent manner. Interacts with COX16. Ubiquitous.

The protein resides in the mitochondrion inner membrane. Copper metallochaperone essential for the synthesis and maturation of cytochrome c oxidase subunit II (MT-CO2/COX2) by facilitating the incorporation of copper into the Cu(A) site of MT-CO2/COX2. Could also act as a thiol-disulfide oxidoreductase to regulate the redox state of the cysteines in SCO1 during maturation of MT-CO2/COX2. The protein is Protein SCO2 homolog, mitochondrial (SCO2) of Homo sapiens (Human).